A 431-amino-acid chain; its full sequence is MSVRDYSGVQVISSRKHRSMSRLPTVLLLLASAAVLAAGGQEATEDPFADETDQCQISVSAETMKSLHGGSMQPDGTCDNLWESFLSQFHQVRENLTACQERAAAGPAPDPSSQFCQQLLDDAQRQMEQEHRQYAATLEEQLHAAQQETQQEQEMKKALQKQLDALTDSRNALYIDLLLANIAIGETKQALSYYNLMPASMPIDKLHEQIVRFVYRVTIYQDQRLLNLMRFVRDIPSVEERRSLYQLAQREVQKRPSQRDGYVAAVYALSVREDLPVYQANRQLYDDLVRQSETRLKEQVANGNFKQAAELAARQPQHFRQLQTSLATIELKHWRKFDRFVPYANALPQPAQRLEVLRVLLSQIGDREKKTSHKYLVKAARQFDICEQFIGRGKVDQAVKKQLEELRGKFATFAKGKNYQHYLSESRKSSG.

The first 39 residues, Met1–Gly39, serve as a signal peptide directing secretion. Asn95 is a glycosylation site (N-linked (GlcNAc...) asparagine). A coiled-coil region spans residues Leu120–Ser169.

As to quaternary structure, homodimer. In terms of tissue distribution, female salivary gland (at protein level). Not detected in female carcass without salivary glands, midgut and hemolymph (at protein level). Probably not expressed in male tissues.

The protein localises to the secreted. In terms of biological role, (Microbial infection) Facilitates efficient midgut colonization by Plasmodium berghei parasites. Promotes successful transmission of Plasmodium berghei at low infection densities. Its function is as follows. (Microbial infection) Facilitates efficient midgut colonization by Plasmodium falciparum. This is Saglin from Anopheles coluzzii (African malaria mosquito).